The chain runs to 253 residues: Chitooligosaccharide deacetylase (253 aa).

Residues histidine 61 and histidine 126 each coordinate Mg(2+).

This sequence belongs to the YdjC deacetylase family. ChbG subfamily. As to quaternary structure, homodimer. Requires Mg(2+) as cofactor.

Its subcellular location is the cytoplasm. The enzyme catalyses N,N'-diacetylchitobiose + H2O = N-acetyl-beta-D-glucosaminyl-(1-&gt;4)-D-glucosamine + acetate. It carries out the reaction diacetylchitobiose-6'-phosphate + H2O = N'-monoacetylchitobiose-6'-phosphate + acetate. It functions in the pathway glycan degradation; chitin degradation. Involved in the degradation of chitin. ChbG is essential for growth on the acetylated chitooligosaccharides chitobiose and chitotriose but is dispensable for growth on cellobiose and chitosan dimer, the deacetylated form of chitobiose. Deacetylation of chitobiose-6-P and chitotriose-6-P is necessary for both the activation of the chb promoter by the regulatory protein ChbR and the hydrolysis of phosphorylated beta-glucosides by the phospho-beta-glucosidase ChbF. Catalyzes the removal of only one acetyl group from chitobiose-6-P to yield monoacetylchitobiose-6-P, the inducer of ChbR and the substrate of ChbF. This is Chitooligosaccharide deacetylase from Yersinia pestis bv. Antiqua (strain Angola).